The primary structure comprises 423 residues: UDP-N-acetylglucosamine 1-carboxyvinyltransferase 2 (423 aa).

23 to 24 (KN) is a binding site for phosphoenolpyruvate. Residue Arg93 participates in UDP-N-acetyl-alpha-D-glucosamine binding. Residue Cys117 is the Proton donor of the active site. Cys117 bears the 2-(S-cysteinyl)pyruvic acid O-phosphothioketal mark. Residues 122–126 (RPIDQ), Asp305, and Ile327 each bind UDP-N-acetyl-alpha-D-glucosamine.

This sequence belongs to the EPSP synthase family. MurA subfamily.

Its subcellular location is the cytoplasm. It carries out the reaction phosphoenolpyruvate + UDP-N-acetyl-alpha-D-glucosamine = UDP-N-acetyl-3-O-(1-carboxyvinyl)-alpha-D-glucosamine + phosphate. The protein operates within cell wall biogenesis; peptidoglycan biosynthesis. Cell wall formation. Adds enolpyruvyl to UDP-N-acetylglucosamine. This is UDP-N-acetylglucosamine 1-carboxyvinyltransferase 2 from Listeria innocua serovar 6a (strain ATCC BAA-680 / CLIP 11262).